Consider the following 388-residue polypeptide: Trans-enoyl reductase tenC (388 aa).

Residue 51 to 54 (VDGK) participates in NADP(+) binding. 142–149 (VGVASVGM) lines the substrate pocket. NADP(+) is bound by residues 219–222 (SSES), Tyr-237, and 284–285 (LD). 304 to 308 (SFTQF) contributes to the substrate binding site. An NADP(+)-binding site is contributed by 373-374 (IK).

It belongs to the zinc-containing alcohol dehydrogenase family. Monomer.

The protein operates within secondary metabolite biosynthesis. Its function is as follows. Trans-enoyl reductase; part of the gene cluster that mediates the biosynthesis of tenellin-type 2-pyridones, iron-chelating compounds involved in iron stress tolerance, competition with the natural competitor fungus Metarhizium robertsii and insect hosts infection. TenC collaborates with the hybrid PKS-NRPS synthetase tenS to catalyze the assembly of the polyketide-amino acid backbone, since tenS lacks a designated enoylreductase (ER) domain. Upon formation of the polyketide backbone on the thiotemplate of tenS, the triketide is transferred to the NRPS module and linked to tyrosine to produce the pyrrolidine-2-dione intermediates, including pretellinin A, 11-hydropretellenin A, 12-hydropretellenin A, 13-hydropretellenin A, 14-hydropretellenin A, 12-oxopretellenin A and prototellinin D. The pathway begins with the assembly of the polyketide-amino acid backbone by the hybrid PKS-NRPS tenS with the help of the enoyl reductase tenC. These enzymes catalyze the synthesis of the pyrrolidine-2-dione intermediates pretellinin A, 11-hydropretellenin A, 12-hydropretellenin A, 13-hydropretellenin A, 14-hydropretellenin A, 12-oxopretellenin A and prototellinin D. The cytochrome P450 monooxygenase tenA then catalyzes an oxidative ring expansion of pretenellin A and 14-hydropretellenin A to form the 2-pyridone core, leading to pretenellin B and pyridovericin, respectively. The cytochrome P450 monooxygenase tenB is then required for the selective N-hydroxylation of the 2-pyridone nitrogen of yield tellinin and 15-hydroxytellenin (15-HT), respectively. The UDP-glucosyltransferase GT1 and the methyltransferase MT1, located outside the tenS gene cluster, contribute to the stepwise glycosylation and methylation of 15-HT to obtain the glycoside pyridovericin-N-O-(4-O-methyl-beta-D-glucopyranoside) (PMGP). Additional related compounds such as 1-O-methyl-15-HT, (8Z)-1-O-methyl-15-HT, and O-methyltenellin A are also produced but the enzymes involved in their biosynthesis have still to be determined. The protein is Trans-enoyl reductase tenC of Beauveria bassiana (White muscardine disease fungus).